Consider the following 158-residue polypeptide: Transcription elongation factor GreA (158 aa).

Belongs to the GreA/GreB family.

Its function is as follows. Necessary for efficient RNA polymerase transcription elongation past template-encoded arresting sites. The arresting sites in DNA have the property of trapping a certain fraction of elongating RNA polymerases that pass through, resulting in locked ternary complexes. Cleavage of the nascent transcript by cleavage factors such as GreA or GreB allows the resumption of elongation from the new 3'terminus. GreA releases sequences of 2 to 3 nucleotides. This Ralstonia nicotianae (strain ATCC BAA-1114 / GMI1000) (Ralstonia solanacearum) protein is Transcription elongation factor GreA.